We begin with the raw amino-acid sequence, 274 residues long: Siroheme biosynthesis protein MET8 (274 aa).

Residues 23 to 24 (EV), 43 to 45 (SPD), and Phe-93 each bind NAD(+). The active-site Proton acceptor is Asp-141.

This sequence belongs to the precorrin-2 dehydrogenase / sirohydrochlorin ferrochelatase family. MET8 subfamily. As to quaternary structure, homodimer.

The enzyme catalyses precorrin-2 + NAD(+) = sirohydrochlorin + NADH + 2 H(+). It catalyses the reaction siroheme + 2 H(+) = sirohydrochlorin + Fe(2+). Its pathway is porphyrin-containing compound metabolism; siroheme biosynthesis; siroheme from sirohydrochlorin: step 1/1. The protein operates within porphyrin-containing compound metabolism; siroheme biosynthesis; sirohydrochlorin from precorrin-2: step 1/1. Its function is as follows. Catalyzes the conversion of precorrin-2 into siroheme. This reaction consist of the NAD-dependent oxidation of precorrin-2 into sirohydrochlorin and its subsequent ferrochelation into siroheme. This is Siroheme biosynthesis protein MET8 from Saccharomyces cerevisiae (strain ATCC 204508 / S288c) (Baker's yeast).